Reading from the N-terminus, the 327-residue chain is Vacuolar protein sorting-associated protein 26A (327 aa).

The segment at 306–327 (RTNFHQRFESPESQASAEQPEM) is disordered. Ser-315 is modified (phosphoserine). The span at 316-327 (PESQASAEQPEM) shows a compositional bias: polar residues.

It belongs to the VPS26 family. In terms of assembly, component of the heterotrimeric retromer cargo-selective complex (CSC), also described as vacuolar protein sorting subcomplex (VPS), formed by VPS26 (VPS26A or VPS26B), VPS29 and VPS35. The CSC has a highly elongated structure with VPS26 and VPS29 binding independently at opposite distal ends of VPS35 as central platform. The CSC is believed to associate with variable sorting nexins to form functionally distinct retromer complex variants. The originally described retromer complex (also called SNX-BAR retromer) is a pentamer containing the CSC and a heterodimeric membrane-deforming subcomplex formed between SNX1 or SNX2 and SNX5 or SNX6 (also called SNX-BAR subcomplex); the respective CSC and SNX-BAR subcomplexes associate with low affinity. The CSC associates with SNX3 to form a SNX3-retromer complex. The CSC associates with SNX27, the WASH complex and the SNX-BAR subcomplex to form the SNX27-retromer complex. Interacts with VPS29, VPS35, SNX27, SNX1, SNX2, SNX5, SNX6, SNX3, RAB7A, ECPAS, EHD1, WASHC5, SORL1.

It localises to the cytoplasm. The protein localises to the endosome membrane. It is found in the early endosome. Its function is as follows. Acts as a component of the retromer cargo-selective complex (CSC). The CSC is believed to be the core functional component of retromer or respective retromer complex variants acting to prevent missorting of selected transmembrane cargo proteins into the lysosomal degradation pathway. The recruitment of the CSC to the endosomal membrane involves RAB7A and SNX3. The SNX-BAR retromer mediates retrograde transport of cargo proteins from endosomes to the trans-Golgi network (TGN) and is involved in endosome-to-plasma membrane transport for cargo protein recycling. The SNX3-retromer mediates the retrograde endosome-to-TGN transport of WLS distinct from the SNX-BAR retromer pathway. The SNX27-retromer is believed to be involved in endosome-to-plasma membrane trafficking and recycling of a broad spectrum of cargo proteins. The CSC complex seems to act as recruitment hub for other proteins, such as the WASH complex and TBC1D5. Required for retrograde transport of lysosomal enzyme receptor IGF2R. Required to regulate transcytosis of the polymeric immunoglobulin receptor (pIgR-pIgA). Required for the endosomal localization of WASHC2 (indicative for the WASH complex). Required for the endosomal localization of TBC1D5. Mediates retromer cargo recognition of SORL1 and is involved in trafficking of SORL1 implicated in sorting and processing of APP. Involved in retromer-independent lysosomal sorting of F2R. Involved in recycling of ADRB2. Acts redundantly with VSP26B in SNX-27 mediated endocytic recycling of SLC2A1/GLUT1. Enhances the affinity of SNX27 for PDZ-binding motifs in cargo proteins. The protein is Vacuolar protein sorting-associated protein 26A (VPS26A) of Bos taurus (Bovine).